Reading from the N-terminus, the 191-residue chain is Adenylate kinase (191 aa).

12-17 contributes to the ATP binding site; that stretch reads GSGKTT. Residues 34–63 form an NMP region; sequence STGDLLRAESAKKTERGLLIEKFTSQGELV. AMP is bound by residues Thr35, Arg40, 61-63, 88-91, and Gln95; these read ELV and GYPR. Residues 130–136 form an LID region; the sequence is GRSRGAD. Arg131 contributes to the ATP binding site. AMP is bound by residues Arg133 and Arg145. ATP is bound at residue Arg173.

Belongs to the adenylate kinase family. As to quaternary structure, monomer.

Its subcellular location is the cytoplasm. It carries out the reaction AMP + ATP = 2 ADP. The protein operates within purine metabolism; AMP biosynthesis via salvage pathway; AMP from ADP: step 1/1. In terms of biological role, catalyzes the reversible transfer of the terminal phosphate group between ATP and AMP. Plays an important role in cellular energy homeostasis and in adenine nucleotide metabolism. This is Adenylate kinase from Helicobacter pylori (strain Shi470).